The primary structure comprises 365 residues: MALNTIDELIEDIRQGKMVILMDDEDRENEGDLIMAAECVRTEDINFMVKHARGLVCMPMTRERCERLGLPLMVQRNGSGFGTKFTVSIEAAEGVTTGISAADRARTVQAAAAKNAVAADIVSPGHIFPLMAQPGGTLARAGHTEAACDLARMAGFEPSGVICEVMNDDGSMARRPELEAFAAEHGIKIGTIADLIHYRLIHERTVERIAEQPLDSELGHFNLITYRDSVEGDVHLALTLGKVCAEEPTLVRVHNMDPLRDLLQVNQPGRWSLRAAMTKVAEAGSGVVLLLGHQIGGDDLLAHVREIASAPAPAPKATTTYSTVGAGSQILRDLGVRKMRLLSAPMRFNAISGFDLEVVEYLPAE.

The segment at 1-201 is DHBP synthase; the sequence is MALNTIDELI…IADLIHYRLI (201 aa). D-ribulose 5-phosphate contacts are provided by residues 27 to 28, Asp32, 140 to 144, and Glu164; these read RE and RAGHT. Glu28 contributes to the Mg(2+) binding site. His143 provides a ligand contact to Mg(2+). The interval 202-365 is GTP cyclohydrolase II-like; that stretch reads HERTVERIAE…LEVVEYLPAE (164 aa).

This sequence in the N-terminal section; belongs to the DHBP synthase family. In the C-terminal section; belongs to the GTP cyclohydrolase II family. Requires Mg(2+) as cofactor. It depends on Mn(2+) as a cofactor.

The catalysed reaction is D-ribulose 5-phosphate = (2S)-2-hydroxy-3-oxobutyl phosphate + formate + H(+). It functions in the pathway cofactor biosynthesis; riboflavin biosynthesis; 2-hydroxy-3-oxobutyl phosphate from D-ribulose 5-phosphate: step 1/1. Functionally, catalyzes the conversion of D-ribulose 5-phosphate to formate and 3,4-dihydroxy-2-butanone 4-phosphate. The chain is 3,4-dihydroxy-2-butanone 4-phosphate synthase (ribB) from Pseudomonas aeruginosa (strain ATCC 15692 / DSM 22644 / CIP 104116 / JCM 14847 / LMG 12228 / 1C / PRS 101 / PAO1).